Consider the following 379-residue polypeptide: UDP-4-amino-4-deoxy-L-arabinose--oxoglutarate aminotransferase (379 aa).

Residue lysine 183 is modified to N6-(pyridoxal phosphate)lysine.

This sequence belongs to the DegT/DnrJ/EryC1 family. ArnB subfamily. Homodimer. Requires pyridoxal 5'-phosphate as cofactor.

The enzyme catalyses UDP-4-amino-4-deoxy-beta-L-arabinose + 2-oxoglutarate = UDP-beta-L-threo-pentopyranos-4-ulose + L-glutamate. It functions in the pathway nucleotide-sugar biosynthesis; UDP-4-deoxy-4-formamido-beta-L-arabinose biosynthesis; UDP-4-deoxy-4-formamido-beta-L-arabinose from UDP-alpha-D-glucuronate: step 2/3. Its pathway is bacterial outer membrane biogenesis; lipopolysaccharide biosynthesis. Functionally, catalyzes the conversion of UDP-4-keto-arabinose (UDP-Ara4O) to UDP-4-amino-4-deoxy-L-arabinose (UDP-L-Ara4N). The modified arabinose is attached to lipid A and is required for resistance to polymyxin and cationic antimicrobial peptides. This is UDP-4-amino-4-deoxy-L-arabinose--oxoglutarate aminotransferase from Pseudomonas fluorescens (strain ATCC BAA-477 / NRRL B-23932 / Pf-5).